Reading from the N-terminus, the 586-residue chain is Arginine--tRNA ligase (586 aa).

Residues 128–138 carry the 'HIGH' region motif; that stretch reads ANPTGPLHVGH.

The protein belongs to the class-I aminoacyl-tRNA synthetase family. In terms of assembly, monomer.

It is found in the cytoplasm. It catalyses the reaction tRNA(Arg) + L-arginine + ATP = L-arginyl-tRNA(Arg) + AMP + diphosphate. In Coxiella burnetii (strain RSA 331 / Henzerling II), this protein is Arginine--tRNA ligase.